The primary structure comprises 1201 residues: Zinc finger protein sdc-1 (1201 aa).

7 C2H2-type zinc fingers span residues 117-139 (LTCAHCDWSFDNVMKLVRHRGVH), 145-168 (YMCQVCLTLFGHTYNLFMHWRTSC), 233-254 (SSCHLCHLPVPNKFLEAHGNVH), 268-290 (YFCHICGTVFIEQDNLFKHWRLH), 486-513 (IVCHKCDSKKLTITFSTEVRLKYHLLRH), 521-543 (YHCAICKIIVYNRSHEEHWINDC), and 652-674 (VVCFHCGTRCHYTLLHDHLDYCH). A disordered region spans residues 1164 to 1201 (KRRNSETREHELIELDTDDLNEPSTSDGRYSFGHHGYR). The segment covering 1167-1176 (NSETREHELI) has biased composition (basic and acidic residues).

In terms of assembly, component of the SDC complex, which consists of sdc-1, sdc-2 and sdc-3. Within the complex, interacts with sdc-2 and sdc-3.

It is found in the nucleus. It localises to the chromosome. Functionally, embryonic transcription factor regulating downstream genes involved specifically in the sex determination and dosage compensation pathways, or regulating other genes involved in the coordinate control of both processes. Component of the SDC complex that functions in sex determination and in X chromosome dosage compensation specifically in hermaphrodite (XX) animals. Involved in the recruitment of the condensin I-like dosage compensation complex to the male sex-determining autosomal gene her-1, thereby contributing to its repression and initiating hermaphrodite sexual development. Similarly, might contribute to X-linked gene repression through recruitment of the dosage compensation complex to the X chromosomes in hermaphrodites. Seems to be involved in the depletion of histone H4 lysine 16 acetylation (H4K16ac) on dosage compensated X chromosomes. Plays a role in developmental rate and body fat regulation downstream of the TOR complex 2 pathway. This is Zinc finger protein sdc-1 (sdc-1) from Caenorhabditis elegans.